Reading from the N-terminus, the 443-residue chain is ATP-dependent protease ATPase subunit HslU (443 aa).

ATP contacts are provided by residues I18 and 60 to 65; that span reads GVGKTE. The interval 137 to 156 is disordered; it reads PPPRDAWGQNEQSEDTSNTR. Positions 145–156 are enriched in polar residues; sequence QNEQSEDTSNTR. ATP contacts are provided by D256, E321, and R393.

The protein belongs to the ClpX chaperone family. HslU subfamily. In terms of assembly, a double ring-shaped homohexamer of HslV is capped on each side by a ring-shaped HslU homohexamer. The assembly of the HslU/HslV complex is dependent on binding of ATP.

It localises to the cytoplasm. Its function is as follows. ATPase subunit of a proteasome-like degradation complex; this subunit has chaperone activity. The binding of ATP and its subsequent hydrolysis by HslU are essential for unfolding of protein substrates subsequently hydrolyzed by HslV. HslU recognizes the N-terminal part of its protein substrates and unfolds these before they are guided to HslV for hydrolysis. The sequence is that of ATP-dependent protease ATPase subunit HslU from Vibrio vulnificus (strain YJ016).